A 292-amino-acid chain; its full sequence is 4-hydroxy-tetrahydrodipicolinate synthase (292 aa).

Threonine 45 provides a ligand contact to pyruvate. Tyrosine 133 functions as the Proton donor/acceptor in the catalytic mechanism. Lysine 161 serves as the catalytic Schiff-base intermediate with substrate. Pyruvate is bound at residue isoleucine 203.

The protein belongs to the DapA family. As to quaternary structure, homotetramer; dimer of dimers.

The protein resides in the cytoplasm. It catalyses the reaction L-aspartate 4-semialdehyde + pyruvate = (2S,4S)-4-hydroxy-2,3,4,5-tetrahydrodipicolinate + H2O + H(+). It participates in amino-acid biosynthesis; L-lysine biosynthesis via DAP pathway; (S)-tetrahydrodipicolinate from L-aspartate: step 3/4. In terms of biological role, catalyzes the condensation of (S)-aspartate-beta-semialdehyde [(S)-ASA] and pyruvate to 4-hydroxy-tetrahydrodipicolinate (HTPA). In Nitrosococcus oceani (strain ATCC 19707 / BCRC 17464 / JCM 30415 / NCIMB 11848 / C-107), this protein is 4-hydroxy-tetrahydrodipicolinate synthase.